The chain runs to 362 residues: Putative integrase ORF3 (362 aa).

In terms of domain architecture, Integrase catalytic spans 179-359; the sequence is YEVKEIGLLQ…TPFNFLNSLS (181 aa). Residues Asp-190 and Asp-256 each contribute to the Mg(2+) site.

This sequence belongs to the plectrovirus integrase ORF3 family.

In terms of biological role, this protein may encode an integrase, which is necessary for integration of the viral DNA into host genome. In Spiroplasma melliferum (SpV1), this protein is Putative integrase ORF3.